The following is a 1374-amino-acid chain: DNA-directed RNA polymerase subunit beta (1374 aa).

It belongs to the RNA polymerase beta chain family. As to quaternary structure, the RNAP catalytic core consists of 2 alpha, 1 beta, 1 beta' and 1 omega subunit. When a sigma factor is associated with the core the holoenzyme is formed, which can initiate transcription.

It carries out the reaction RNA(n) + a ribonucleoside 5'-triphosphate = RNA(n+1) + diphosphate. Its function is as follows. DNA-dependent RNA polymerase catalyzes the transcription of DNA into RNA using the four ribonucleoside triphosphates as substrates. The sequence is that of DNA-directed RNA polymerase subunit beta from Methylobacterium nodulans (strain LMG 21967 / CNCM I-2342 / ORS 2060).